We begin with the raw amino-acid sequence, 147 residues long: Ribosome maturation factor RimP (147 aa).

This sequence belongs to the RimP family.

The protein localises to the cytoplasm. Required for maturation of 30S ribosomal subunits. In Thermosipho melanesiensis (strain DSM 12029 / CIP 104789 / BI429), this protein is Ribosome maturation factor RimP.